The following is a 1383-amino-acid chain: MSSAGDSGPGYVLNDFDAVPRLSYARSIDIRDSLSDLIRIQRDSYDAFIGIDEGSSGGIQSIFQSMFPIRDPLGRAVLEFVSCNIGEPQYDEYECIKRGITFSVPMRITLRFVVWKVQEVSFKEVKYVVDEGTLERSVKYMKEQEVSIGDLPMMTSYGTFIINGIERVIVSQMHRSPGVFFDSDKGKTYSSGKLIYSARIIPYRGSWLDFEFDIKDIIYFRIDKKRKLPVTYLLKALGMSNNDILDTFYDKVLYVRSDKGWKVPFVVDRFKGVRLSYDLMDVDGNVLIKANTRITLRIAKKLYADGLREYLVPFAGISGLFVATDLVDPASGAVIVSAGEAIAAEHIVKLELFDISEIAFLNIDFLTVGPYVLNTLFLDRHITQEDALFEIYRVLRSGESPNLEAVKSFFKGLFFEPDRYDLSVVGRIKLNSHLRLDIDENLTVLTKDDIVHVIKKLVLLPDGEGVVDDIDHLGNRRVRSVGEFIENQFRVGILRLERMIMDYMSSVNFDNAVPCDFVNPKILATVLKDFFSSSQLSQFMDQTNPLSEVTHKRRLSALGPGGLTRERAGFEVRDVHPTHYGRICPIETPEGQNIGLISSLAIYAKINKYGFIESPYRKVIDGVVTDSVEYLLATQESDYYIADAGAALDENNRFVDDMLYCRHGGNFVMVKREDVNYIDVSPKQIVSVAASLIPFLENNDANRALMGSNMQRQAVPLLKAEAPLVGTGMESVVAAGSGAVVLAKRDGVVHRVDGSYIVIRAFDKNKDEYLGVDIYKLRKFQRSNHNTCINQRPIVKIGDYVRTNDVIADGAAIDRGELALGKNVLVAFMSWQGYNFEDSIVISSDVVKRDVFTSIHIEEFECVVRDTPLGPEKIMRSVPDVNEESLSHLDDVGIVNIGAEVSAGSVLVGKVTPRPPVSLPPETKLLVTIFGEKVFDCVDSSLYLPPDVEGTVIDVHVFVRRGVEENDRSLLIKQSEVNSFRKERDYEIDVVSEYFYDELKKLLCSADLPLNGHADVESLLAAKSLEALWEIGLSNPKISAKVADMKGKFDELITEAHSKFDQKIDKLNYGYDLPQGVLTIVKVFVAVKHNLQPGDKMAGRHGNKGVISRIVPVEDMPHLEDGTPVDIILNSLGVPSRMNIGQILETHLGWAAVNLGHRVGRMLDSGEEEGPVVESIRSFLSEVYEGQKLKEDVASMSDEALLKFANRLRRGVPMAAPVFEGPKDAQISRLLELADVDPSGQVDLYDGRSGQKFDRKVTVGYIYMLKLHHLVDDKIHARSVGPYGLVTQQPLGGKSHFGGQRFGEMECWALQAYGAAYTLQEMLTVKSDDIVGRVRIYESIIKGDSNFECGIPESFNVMVKELRSLCLDVVLKQDKEFTSSKVE.

This sequence belongs to the RNA polymerase beta chain family. The RNAP catalytic core consists of 2 alpha, 1 beta, 1 beta' and 1 omega subunit. When a sigma factor is associated with the core the holoenzyme is formed, which can initiate transcription.

It carries out the reaction RNA(n) + a ribonucleoside 5'-triphosphate = RNA(n+1) + diphosphate. Functionally, DNA-dependent RNA polymerase catalyzes the transcription of DNA into RNA using the four ribonucleoside triphosphates as substrates. The polypeptide is DNA-directed RNA polymerase subunit beta (Anaplasma phagocytophilum (strain HZ)).